Here is a 421-residue protein sequence, read N- to C-terminus: D-amino acid dehydrogenase (421 aa).

3 to 17 (VLVLGGGVVGVASAY) provides a ligand contact to FAD.

The protein belongs to the DadA oxidoreductase family. FAD is required as a cofactor.

It catalyses the reaction a D-alpha-amino acid + A + H2O = a 2-oxocarboxylate + AH2 + NH4(+). Its pathway is amino-acid degradation; D-alanine degradation; NH(3) and pyruvate from D-alanine: step 1/1. Its function is as follows. Oxidative deamination of D-amino acids. This chain is D-amino acid dehydrogenase, found in Methylobacterium nodulans (strain LMG 21967 / CNCM I-2342 / ORS 2060).